Consider the following 269-residue polypeptide: S-adenosylmethionine decarboxylase proenzyme (269 aa).

The active-site Schiff-base intermediate with substrate; via pyruvic acid is the serine 118. A Pyruvic acid (Ser); by autocatalysis modification is found at serine 118. Histidine 123 (proton acceptor; for processing activity) is an active-site residue. Catalysis depends on cysteine 146, which acts as the Proton donor; for catalytic activity.

Belongs to the prokaryotic AdoMetDC family. Type 2 subfamily. In terms of assembly, heterooctamer of four alpha and four beta chains arranged as a tetramer of alpha/beta heterodimers. Pyruvate serves as cofactor. Is synthesized initially as an inactive proenzyme. Formation of the active enzyme involves a self-maturation process in which the active site pyruvoyl group is generated from an internal serine residue via an autocatalytic post-translational modification. Two non-identical subunits are generated from the proenzyme in this reaction, and the pyruvate is formed at the N-terminus of the alpha chain, which is derived from the carboxyl end of the proenzyme. The post-translation cleavage follows an unusual pathway, termed non-hydrolytic serinolysis, in which the side chain hydroxyl group of the serine supplies its oxygen atom to form the C-terminus of the beta chain, while the remainder of the serine residue undergoes an oxidative deamination to produce ammonia and the pyruvoyl group blocking the N-terminus of the alpha chain.

The enzyme catalyses S-adenosyl-L-methionine + H(+) = S-adenosyl 3-(methylsulfanyl)propylamine + CO2. The protein operates within amine and polyamine biosynthesis; S-adenosylmethioninamine biosynthesis; S-adenosylmethioninamine from S-adenosyl-L-methionine: step 1/1. Catalyzes the decarboxylation of S-adenosylmethionine to S-adenosylmethioninamine (dcAdoMet), the propylamine donor required for the synthesis of the polyamines spermine and spermidine from the diamine putrescine. This is S-adenosylmethionine decarboxylase proenzyme from Brevibacillus brevis (strain 47 / JCM 6285 / NBRC 100599).